The chain runs to 20 residues: Succinate--CoA ligase [ADP-forming] subunit beta, mitochondrial (20 aa).

The region spanning 8–20 is the ATP-grasp domain; sequence SMELLQEAGVSIP.

Belongs to the succinate/malate CoA ligase beta subunit family. ATP-specific subunit beta subfamily. In terms of assembly, heterodimer of an alpha and a beta subunit. The beta subunit determines specificity for ATP. Interacts with ALAS2.

It is found in the mitochondrion. The enzyme catalyses succinate + ATP + CoA = succinyl-CoA + ADP + phosphate. Its pathway is carbohydrate metabolism; tricarboxylic acid cycle; succinate from succinyl-CoA (ligase route): step 1/1. Its function is as follows. ATP-specific succinyl-CoA synthetase functions in the citric acid cycle (TCA), coupling the hydrolysis of succinyl-CoA to the synthesis of ATP and thus represents the only step of substrate-level phosphorylation in the TCA. The beta subunit provides nucleotide specificity of the enzyme and binds the substrate succinate, while the binding sites for coenzyme A and phosphate are found in the alpha subunit. This chain is Succinate--CoA ligase [ADP-forming] subunit beta, mitochondrial, found in Canis lupus familiaris (Dog).